An 85-amino-acid chain; its full sequence is Small ribosomal subunit protein uS17 (85 aa).

The protein belongs to the universal ribosomal protein uS17 family. Part of the 30S ribosomal subunit.

In terms of biological role, one of the primary rRNA binding proteins, it binds specifically to the 5'-end of 16S ribosomal RNA. The polypeptide is Small ribosomal subunit protein uS17 (Pasteurella multocida (strain Pm70)).